Consider the following 366-residue polypeptide: L-Ala-D/L-Glu epimerase (366 aa).

Substrate contacts are provided by arginine 24, threonine 135, and lysine 160. Lysine 162 functions as the Proton acceptor; specific for (R)-substrate epimerization in the catalytic mechanism. The Mg(2+) site is built by aspartate 191, glutamate 219, and aspartate 244. Lysine 268 (proton acceptor; specific for (S)-substrate epimerization) is an active-site residue. Serine 296, isoleucine 298, aspartate 321, and aspartate 323 together coordinate substrate.

This sequence belongs to the mandelate racemase/muconate lactonizing enzyme family. In terms of assembly, homooctamer; tetramer of dimers. The cofactor is Mg(2+).

It carries out the reaction L-alanyl-L-glutamate = L-alanyl-D-glutamate. It participates in cell wall degradation; peptidoglycan degradation. Functionally, catalyzes the epimerization of L-Ala-D-Glu to L-Ala-L-Glu and has probably a role in the metabolism of the murein peptide, of which L-Ala-D-Glu is a component. Is also able to catalyze the reverse reaction and the epimerization of the other Ala-X dipeptides L-Ala-L-Asp, L-Ala-L-Leu, L-Ala-L-Met, and L-Ala-L-Ser. Is not able to epimerize other L-Ala-X dipeptides. Is also active with L-Ser-L-Glu and, oddly, L-Pro-L-Glu, but not with L-Glu-L-Glu, L-Lys-L-Glu, L-Lys-L-Ala, or D-Ala-D-Ala. This Bacillus subtilis (strain 168) protein is L-Ala-D/L-Glu epimerase (ykfB).